The chain runs to 105 residues: Iron-sulfur cluster assembly protein CyaY (105 aa).

It belongs to the frataxin family.

Involved in iron-sulfur (Fe-S) cluster assembly. May act as a regulator of Fe-S biogenesis. The protein is Iron-sulfur cluster assembly protein CyaY of Dechloromonas aromatica (strain RCB).